We begin with the raw amino-acid sequence, 441 residues long: Glutamate--tRNA ligase 2 (441 aa).

A 'HIGH' region motif is present at residues Pro8–Asn18. The short motif at Ala239–Arg243 is the 'KMSKS' region element. Residue Lys242 participates in ATP binding.

It belongs to the class-I aminoacyl-tRNA synthetase family. Glutamate--tRNA ligase type 1 subfamily. Monomer.

It localises to the cytoplasm. It catalyses the reaction tRNA(Glu) + L-glutamate + ATP = L-glutamyl-tRNA(Glu) + AMP + diphosphate. Its function is as follows. Catalyzes the attachment of glutamate to tRNA(Glu) in a two-step reaction: glutamate is first activated by ATP to form Glu-AMP and then transferred to the acceptor end of tRNA(Glu). This chain is Glutamate--tRNA ligase 2, found in Ruegeria sp. (strain TM1040) (Silicibacter sp.).